The chain runs to 353 residues: MRFVDEVVINVKAGKGGNGIVSFRREKYIEFGGPDGGDGGDGGSVYLRASDGLNTLSDFRYTRHFEAENGAAGEGRNKRGRSGEDLYIDVPLGTQVFVAETDELMGDLTAVGQTLLVAKGGFHGIGNTRYKSSVNRAPRQCKAGGLGEERVIRLELKLLADVGLLGMPNAGKSTLIAQVSSAKPKIADYPFTTLHPNLGVVRVGALQSFVMADIPGLIAGAADGMGLGHQFLRHLARNRILLHLLDCSPMSDSQNPITDFEQVSAELIKYDADFAQIPRWLVLNKMDTLPPELWQQKQEEIVRALNWQGKVFSISAAAGIGTAELCTAIMQELTAMKANQTAENDEPNAPELI.

In terms of domain architecture, Obg spans 1–159 (MRFVDEVVIN…RVIRLELKLL (159 aa)). The OBG-type G domain maps to 160–334 (ADVGLLGMPN…LCTAIMQELT (175 aa)). Residues 166–173 (GMPNAGKS), 191–195 (FTTLH), 213–216 (DIPG), 284–287 (NKMD), and 315–317 (SAA) each bind GTP. 2 residues coordinate Mg(2+): S173 and T193.

It belongs to the TRAFAC class OBG-HflX-like GTPase superfamily. OBG GTPase family. As to quaternary structure, monomer. Mg(2+) serves as cofactor.

It is found in the cytoplasm. An essential GTPase which binds GTP, GDP and possibly (p)ppGpp with moderate affinity, with high nucleotide exchange rates and a fairly low GTP hydrolysis rate. Plays a role in control of the cell cycle, stress response, ribosome biogenesis and in those bacteria that undergo differentiation, in morphogenesis control. The chain is GTPase Obg from Dichelobacter nodosus (strain VCS1703A).